The following is a 40-amino-acid chain: U2-myrmicitoxin-Tb1a (40 aa).

Residues 1-3 (AEA) form the signal peptide. A propeptide spanning residues 4 to 29 (MAEAMADAMADAMADAMADAMAEAAA) is cleaved from the precursor. Arginine 39 is modified (arginine amide).

Belongs to the formicidae venom precursor-01 superfamily. Expressed by the venom gland.

It localises to the secreted. Its function is as follows. Venom protein with unknown function. Does not induce paralysis when a high dose is administered by intrathoracic injection into the blowfly Lucilia caesar. The protein is U2-myrmicitoxin-Tb1a of Tetramorium bicarinatum (Tramp ant).